The following is a 203-amino-acid chain: Nudix hydrolase 12, mitochondrial (203 aa).

The 149-residue stretch at 18-166 (NFRLVSGCIP…WMQRALEEFL (149 aa)) folds into the Nudix hydrolase domain. Residues 66–87 (GGWEDDETVLEAASREAIEEAG) carry the Nudix box motif. Residues glutamate 81 and glutamate 85 each contribute to the Mg(2+) site.

It belongs to the Nudix hydrolase family. Requires Mg(2+) as cofactor. It depends on Mn(2+) as a cofactor. Expressed in roots, leaves, stems and inflorescences.

The protein localises to the mitochondrion. Functionally, probably mediates the hydrolysis of some nucleoside diphosphate derivatives. The sequence is that of Nudix hydrolase 12, mitochondrial (NUDT12) from Arabidopsis thaliana (Mouse-ear cress).